Here is a 242-residue protein sequence, read N- to C-terminus: Large ribosomal subunit protein uL30y (242 aa).

It belongs to the universal ribosomal protein uL30 family.

This Arabidopsis thaliana (Mouse-ear cress) protein is Large ribosomal subunit protein uL30y (RPL7B).